The primary structure comprises 522 residues: Zinc finger and BTB domain-containing protein 18 (522 aa).

Positions 24–91 constitute a BTB domain; the sequence is CDCTVLVGDA…MYEGKLQFKD (68 aa). Residues 121-143 are compositionally biased toward basic and acidic residues; sequence ATTEADSTKKEEDASSCSDKVES. The tract at residues 121–166 is disordered; it reads ATTEADSTKKEEDASSCSDKVESLSDGSSHMAGDLPSDEDEGEDDK. Serine 157 is subject to Phosphoserine. Lysine 273 participates in a covalent cross-link: Glycyl lysine isopeptide (Lys-Gly) (interchain with G-Cter in SUMO2). The segment at 310–427 is interaction with DNMT3A; it reads EPAHLAPLRE…TFSCMYTLKR (118 aa). C2H2-type zinc fingers lie at residues 370-392, 410-432, 438-460, and 466-489; these read FMCP…LSTH, PTCS…ERTH, YTCT…AVVH, and HACK…RKFH. Serine 516 and serine 517 each carry phosphoserine.

The protein belongs to the krueppel C2H2-type zinc-finger protein family. ZBTB18 subfamily. In terms of assembly, interacts with DNMT3A.

Its subcellular location is the nucleus. Its function is as follows. Transcriptional repressor that plays a role in various developmental processes such as myogenesis and brain development. Specifically binds the consensus DNA sequence 5'-[AC]ACATCTG[GT][AC]-3' which contains the E box core, and acts by recruiting chromatin remodeling multiprotein complexes. Plays a key role in myogenesis by directly repressing the expression of ID2 and ID3, 2 inhibitors of skeletal myogenesis. Also involved in controlling cell division of progenitor cells and regulating the survival of postmitotic cortical neurons. May also play a role in the organization of chromosomes in the nucleus. The protein is Zinc finger and BTB domain-containing protein 18 (Zbtb18) of Rattus norvegicus (Rat).